A 478-amino-acid chain; its full sequence is Uronate isomerase (478 aa).

Belongs to the metallo-dependent hydrolases superfamily. Uronate isomerase family.

The enzyme catalyses D-glucuronate = D-fructuronate. It carries out the reaction aldehydo-D-galacturonate = keto-D-tagaturonate. It participates in carbohydrate metabolism; pentose and glucuronate interconversion. The sequence is that of Uronate isomerase from Bacillus pumilus (strain SAFR-032).